Reading from the N-terminus, the 163-residue chain is Secretory-abundant heat soluble protein 53582 (163 aa).

A signal peptide spans 1–19; it reads MARLFVAVALFGVVAFAAA. An SAHS-c1 region spans residues 22–51; it reads EWTGKTWLGSWASTDRAENWEAFVDALGLP. The tract at residues 67–95 is SAHS-c2; that stretch reads YKQGDKYHHEVSIPSKNFKKAIEYTLGTE. The segment at 108–157 is SAHS-c3; the sequence is KYTEDGEKLVADVQIPSKNKQIHDIYEVQGDTLTKTYKVGDVVAKRWFTR.

The protein belongs to the Secretory-abundant heat soluble protein (SAHS) family.

It is found in the secreted. Its function is as follows. Secreted heat soluble protein acting as a molecular shield in water-deficient condition. Tardigrade-specific intrinsically disordered proteins (TDPs) are essential for desiccation tolerance by forming non-crystalline amorphous solids upon desiccation, and this vitrified state mirrors their protective capabilities. The protein is Secretory-abundant heat soluble protein 53582 of Hypsibius exemplaris (Freshwater tardigrade).